A 285-amino-acid polypeptide reads, in one-letter code: 1-acyl-sn-glycerol-3-phosphate acyltransferase alpha (285 aa).

Positions 1–28 (MELWPGAWTALLLLLLLLLSTLWFCSSS) are cleaved as a signal peptide. The Lumenal segment spans residues 29–34 (AKYFFK). The chain crosses the membrane as a helical span at residues 35-55 (MAFYNGWILFLAILAIPVCAV). The Cytoplasmic segment spans residues 56–124 (RGRNVENMKI…PDRCVPIAKR (69 aa)). The short motif at 101 to 106 (HQSSLD) is the HXXXXD motif element. A helical membrane pass occupies residues 125-145 (ELLWAGSAGLACWLAGIIFID). At 146 to 189 (RKRTGDAISVMSEVAQTLLTQDVRVWVFPEGTRNHNGSMLPFKR) the chain is on the lumenal side. Residues 175–178 (EGTR) carry the EGTR motif motif.

This sequence belongs to the 1-acyl-sn-glycerol-3-phosphate acyltransferase family. Widely expressed.

The protein resides in the endoplasmic reticulum membrane. It catalyses the reaction a 1-acyl-sn-glycero-3-phosphate + an acyl-CoA = a 1,2-diacyl-sn-glycero-3-phosphate + CoA. The enzyme catalyses 1-(9Z-octadecenoyl)-sn-glycero-3-phosphate + (9Z)-octadecenoyl-CoA = 1,2-di-(9Z-octadecenoyl)-sn-glycero-3-phosphate + CoA. It carries out the reaction 1-(9Z-octadecenoyl)-sn-glycero-3-phosphate + hexadecanoyl-CoA = 1-(9Z)-octadecenoyl-2-hexadecanoyl-sn-glycero-3-phosphate + CoA. The catalysed reaction is heptadecanoyl-CoA + 1-(9Z-octadecenoyl)-sn-glycero-3-phosphate = 1-(9Z)-octadecenoyl-2-heptadecanoyl-sn-glycero-3-phosphate + CoA. It catalyses the reaction 1-(9Z-octadecenoyl)-sn-glycero-3-phosphate + octadecanoyl-CoA = 1-(9Z-octadecenoyl)-2-octadecanoyl-sn-glycero-3-phosphate + CoA. The enzyme catalyses 1-(9Z-octadecenoyl)-sn-glycero-3-phosphate + (9Z,12Z)-octadecadienoyl-CoA = 1-(9Z)-octadecenoyl-2-(9Z,12Z)-octadecadienoyl-sn-glycero-3-phosphate + CoA. It carries out the reaction 1-(9Z-octadecenoyl)-sn-glycero-3-phosphate + tetradecanoyl-CoA = 1-(9Z)-octadecenoyl-2-tetradecanoyl-sn-glycero-3-phosphate + CoA. The catalysed reaction is pentadecanoyl-CoA + 1-(9Z-octadecenoyl)-sn-glycero-3-phosphate = 1-(9Z)-octadecenoyl-2-pentadecanoyl-sn-glycero-3-phosphate + CoA. It catalyses the reaction 1-hexadecanoyl-sn-glycero-3-phosphate + (9Z)-octadecenoyl-CoA = 1-hexadecanoyl-2-(9Z-octadecenoyl)-sn-glycero-3-phosphate + CoA. The enzyme catalyses 1-(9Z,12Z,15Z)-octadecatrienoyl-sn-glycero-3-phosphate + (9Z)-octadecenoyl-CoA = 1-(9Z,12Z,15Z)-octadecatrienoyl-2-(9Z)-octadecenoyl-sn-glycero-3-phosphate + CoA. It carries out the reaction 1-(6Z,9Z,12Z-octadecatrienoyl)-sn-glycero-3-phosphate + (9Z)-octadecenoyl-CoA = (6Z,9Z,12Z)-octadecatrienoyl-2-(9Z)-octadecenoyl-sn-glycero-3-phosphate + CoA. The catalysed reaction is 1-eicosanoyl-sn-glycero-3-phosphate + (9Z)-octadecenoyl-CoA = 1-eicosanoyl-2-(9Z)-octadecenoyl-sn-glycero-3-phosphate + CoA. It catalyses the reaction 1-tetradecanoyl-sn-glycerol 3-phosphate + (9Z)-octadecenoyl-CoA = 1-tetradecanoyl-2-(9Z)-octadecenoyl-sn-glycero-3-phosphate + CoA. The enzyme catalyses 1-(9Z-octadecenoyl)-sn-glycero-3-phosphate + (5Z,8Z,11Z,14Z)-eicosatetraenoyl-CoA = 1-(9Z)-octadecenoyl-2-(5Z,8Z,11Z,14Z)-eicosatetraenoyl-sn-glycero-3-phosphate + CoA. It carries out the reaction 1-(9Z-octadecenoyl)-sn-glycero-3-phosphate + dodecanoyl-CoA = 1-(9Z)-octadecenoyl-2-dodecanoyl-sn-glycero-3-phosphate + CoA. The catalysed reaction is (6Z)-octadecenoyl-CoA + 1-(9Z-octadecenoyl)-sn-glycero-3-phosphate = 1-(9Z)-octadecenoyl-2-(6Z)-octadecenoyl-sn-glycero-3-phosphate + CoA. It catalyses the reaction (11Z)-octadecenoyl-CoA + 1-(9Z-octadecenoyl)-sn-glycero-3-phosphate = 1-(9Z)-octadecenoyl-2-(11Z)-octadecenoyl-sn-glycero-3-phosphate + CoA. The enzyme catalyses (9Z)-hexadecenoyl-CoA + 1-(9Z-octadecenoyl)-sn-glycero-3-phosphate = 1-(9Z-octadecenoyl)-2-(9Z-hexadecenoyl)-sn-glycero-3-phosphate + CoA. It participates in phospholipid metabolism; CDP-diacylglycerol biosynthesis; CDP-diacylglycerol from sn-glycerol 3-phosphate: step 2/3. Converts 1-acyl-sn-glycerol-3-phosphate (lysophosphatidic acid or LPA) into 1,2-diacyl-sn-glycerol-3-phosphate (phosphatidic acid or PA) by incorporating an acyl moiety at the sn-2 position of the glycerol backbone. The sequence is that of 1-acyl-sn-glycerol-3-phosphate acyltransferase alpha (Agpat1) from Mus musculus (Mouse).